The sequence spans 504 residues: Glucose-6-phosphate isomerase (504 aa).

The active-site Proton donor is E333. Residues H364 and K473 contribute to the active site.

This sequence belongs to the GPI family.

It is found in the cytoplasm. It carries out the reaction alpha-D-glucose 6-phosphate = beta-D-fructose 6-phosphate. Its pathway is carbohydrate biosynthesis; gluconeogenesis. It functions in the pathway carbohydrate degradation; glycolysis; D-glyceraldehyde 3-phosphate and glycerone phosphate from D-glucose: step 2/4. In terms of biological role, catalyzes the reversible isomerization of glucose-6-phosphate to fructose-6-phosphate. The chain is Glucose-6-phosphate isomerase from Stenotrophomonas maltophilia (strain R551-3).